Reading from the N-terminus, the 961-residue chain is Probable inorganic carbon transporter subunit DabA (961 aa).

Residues Cys406, Asp408, His653, and Cys668 each coordinate Zn(2+).

This sequence belongs to the inorganic carbon transporter (TC 9.A.2) DabA family. Forms a complex with DabB. Requires Zn(2+) as cofactor.

The protein resides in the cell inner membrane. In terms of biological role, part of an energy-coupled inorganic carbon pump. This Hydrogenobaculum sp. (strain Y04AAS1) protein is Probable inorganic carbon transporter subunit DabA.